We begin with the raw amino-acid sequence, 214 residues long: Probable nicotinate-nucleotide adenylyltransferase (214 aa).

The protein belongs to the NadD family.

The catalysed reaction is nicotinate beta-D-ribonucleotide + ATP + H(+) = deamido-NAD(+) + diphosphate. Its pathway is cofactor biosynthesis; NAD(+) biosynthesis; deamido-NAD(+) from nicotinate D-ribonucleotide: step 1/1. Its function is as follows. Catalyzes the reversible adenylation of nicotinate mononucleotide (NaMN) to nicotinic acid adenine dinucleotide (NaAD). This chain is Probable nicotinate-nucleotide adenylyltransferase, found in Aeromonas salmonicida (strain A449).